A 145-amino-acid polypeptide reads, in one-letter code: D-aminoacyl-tRNA deacylase (145 aa).

The short motif at 137–138 is the Gly-cisPro motif, important for rejection of L-amino acids element; the sequence is GP.

It belongs to the DTD family. In terms of assembly, homodimer.

It is found in the cytoplasm. The catalysed reaction is glycyl-tRNA(Ala) + H2O = tRNA(Ala) + glycine + H(+). It catalyses the reaction a D-aminoacyl-tRNA + H2O = a tRNA + a D-alpha-amino acid + H(+). Its function is as follows. An aminoacyl-tRNA editing enzyme that deacylates mischarged D-aminoacyl-tRNAs. Also deacylates mischarged glycyl-tRNA(Ala), protecting cells against glycine mischarging by AlaRS. Acts via tRNA-based rather than protein-based catalysis; rejects L-amino acids rather than detecting D-amino acids in the active site. By recycling D-aminoacyl-tRNA to D-amino acids and free tRNA molecules, this enzyme counteracts the toxicity associated with the formation of D-aminoacyl-tRNA entities in vivo and helps enforce protein L-homochirality. This is D-aminoacyl-tRNA deacylase from Teredinibacter turnerae (strain ATCC 39867 / T7901).